Here is a 134-residue protein sequence, read N- to C-terminus: Small ribosomal subunit protein eS24A (134 aa).

An N-acetylserine modification is found at serine 2. The segment at 100–134 (IQKVARQQRKQRKNRGKKVFGTGKRLAKRKSKQQD) is disordered. Basic residues-rich tracts occupy residues 105–117 (RQQR…RGKK) and 124–134 (RLAKRKSKQQD).

It belongs to the eukaryotic ribosomal protein eS24 family. In terms of assembly, component of the small ribosomal subunit (SSU). Mature yeast ribosomes consist of a small (40S) and a large (60S) subunit. The 40S small subunit contains 1 molecule of ribosomal RNA (18S rRNA) and at least 33 different proteins. The large 60S subunit contains 3 rRNA molecules (25S, 5.8S and 5S rRNA) and at least 46 different proteins.

It localises to the cytoplasm. In terms of biological role, component of the ribosome, a large ribonucleoprotein complex responsible for the synthesis of proteins in the cell. The small ribosomal subunit (SSU) binds messenger RNAs (mRNAs) and translates the encoded message by selecting cognate aminoacyl-transfer RNA (tRNA) molecules. The large subunit (LSU) contains the ribosomal catalytic site termed the peptidyl transferase center (PTC), which catalyzes the formation of peptide bonds, thereby polymerizing the amino acids delivered by tRNAs into a polypeptide chain. The nascent polypeptides leave the ribosome through a tunnel in the LSU and interact with protein factors that function in enzymatic processing, targeting, and the membrane insertion of nascent chains at the exit of the ribosomal tunnel. This is Small ribosomal subunit protein eS24A (rps2401) from Schizosaccharomyces pombe (strain 972 / ATCC 24843) (Fission yeast).